Reading from the N-terminus, the 371-residue chain is Transmembrane protein 229A (371 aa).

The interval 1–30 is disordered; that stretch reads MAGSDVASEGPSPRDGATRRPGATGGLRSQ. The next 6 membrane-spanning stretches (helical) occupy residues 51–71, 117–137, 235–255, 269–289, 301–321, and 334–354; these read LPAW…DVLV, AFLF…TLAG, FLFF…FFNV, LWSF…YFHL, VPIY…GLRM, and LNFM…LSVY.

The protein belongs to the TMEM229 family.

Its subcellular location is the membrane. The chain is Transmembrane protein 229A (Tmem229a) from Mus musculus (Mouse).